Reading from the N-terminus, the 118-residue chain is V-type proton ATPase subunit G 2 (118 aa).

The disordered stretch occupies residues 23-91 (ADARKRKARR…QGMQSSQQRN (69 aa)). Over residues 35–55 (QAKEEAQMEVEQYRREREQEF) the composition is skewed to basic and acidic residues. 2 stretches are compositionally biased toward polar residues: residues 56–69 (QSKQ…QGNL) and 78–89 (RRQVQGMQSSQQ).

This sequence belongs to the V-ATPase G subunit family. V-ATPase is a heteromultimeric enzyme made up of two complexes: the ATP-hydrolytic V1 complex and the proton translocation V0 complex. The V1 complex consists of three catalytic AB heterodimers that form a heterohexamer, three peripheral stalks each consisting of EG heterodimers, one central rotor including subunits D and F, and the regulatory subunits C and H. The proton translocation complex V0 consists of the proton transport subunit a, a ring of proteolipid subunits c9c'', rotary subunit d, subunits e and f, and the accessory subunits ATP6AP1/Ac45 and ATP6AP2/PRR.

The protein localises to the melanosome. Its subcellular location is the cytoplasmic vesicle. It is found in the clathrin-coated vesicle membrane. Subunit of the V1 complex of vacuolar(H+)-ATPase (V-ATPase), a multisubunit enzyme composed of a peripheral complex (V1) that hydrolyzes ATP and a membrane integral complex (V0) that translocates protons. V-ATPase is responsible for acidifying and maintaining the pH of intracellular compartments and in some cell types, is targeted to the plasma membrane, where it is responsible for acidifying the extracellular environment. This is V-type proton ATPase subunit G 2 (Atp6v1g2) from Mus musculus (Mouse).